Reading from the N-terminus, the 486-residue chain is Cardiolipin synthase A (486 aa).

The next 2 membrane-spanning stretches (helical) occupy residues 3–23 and 38–58; these read TVYT…IAGV and MAWL…YLAV. PLD phosphodiesterase domains follow at residues 219 to 246 and 399 to 426; these read MDLR…VDPR and EGGL…DMRS. Catalysis depends on residues histidine 224, lysine 226, aspartate 231, histidine 404, lysine 406, and aspartate 411.

Belongs to the phospholipase D family. Cardiolipin synthase subfamily. ClsA sub-subfamily.

It is found in the cell inner membrane. The catalysed reaction is 2 a 1,2-diacyl-sn-glycero-3-phospho-(1'-sn-glycerol) = a cardiolipin + glycerol. Catalyzes the reversible phosphatidyl group transfer from one phosphatidylglycerol molecule to another to form cardiolipin (CL) (diphosphatidylglycerol) and glycerol. The sequence is that of Cardiolipin synthase A from Shigella boydii serotype 4 (strain Sb227).